The following is a 248-amino-acid chain: Triosephosphate isomerase (248 aa).

14-16 (NWK) lines the substrate pocket. H99 functions as the Electrophile in the catalytic mechanism. E170 functions as the Proton acceptor in the catalytic mechanism. Substrate-binding positions include G176, S212, and 233 to 234 (GG).

The protein belongs to the triosephosphate isomerase family. As to quaternary structure, homodimer.

It localises to the cytoplasm. It carries out the reaction D-glyceraldehyde 3-phosphate = dihydroxyacetone phosphate. It functions in the pathway carbohydrate biosynthesis; gluconeogenesis. Its pathway is carbohydrate degradation; glycolysis; D-glyceraldehyde 3-phosphate from glycerone phosphate: step 1/1. Its function is as follows. Involved in the gluconeogenesis. Catalyzes stereospecifically the conversion of dihydroxyacetone phosphate (DHAP) to D-glyceraldehyde-3-phosphate (G3P). The sequence is that of Triosephosphate isomerase from Bordetella bronchiseptica (strain ATCC BAA-588 / NCTC 13252 / RB50) (Alcaligenes bronchisepticus).